A 387-amino-acid chain; its full sequence is MEQVVIVDAIRTPMGRSKGGAFRNVRAEDLSAHLMRSLLARNPALEAAALDDIYWGCVQQTLEQGFNIARNAALLAEVPHSVPAVTVNRLCGSSMQALHDAARMIMTGDAQACLVGGVEHMGHVPMSHGVDFHPGLSRNVAKAAGMMGLTAEMLARMHGISREMQDAFAARSHARAWAATQSGAFKNEIIPTGGHDADGVLKQFNYDEVIRPETTVEALATLRPAFDPVSGTVTAGTSSALSDGAAAMLVMSESRARDLGLKPRACVRSMAVVGCDPSIMGYGPVPASKLALKKAGLSASDIGVFEMNEAFAAQILPCIKDLGLMEQIDEKINLNGGAIALGHPLGCSGARISTTLLNLMERKDVQFGLATMCIGLGQGIATVFERV.

The Acyl-thioester intermediate role is filled by Cys91. Residues His343 and Cys373 each act as proton acceptor in the active site.

Belongs to the thiolase-like superfamily. Thiolase family. In terms of assembly, heterotetramer of two alpha chains (FadB) and two beta chains (FadA).

The protein resides in the cytoplasm. The enzyme catalyses an acyl-CoA + acetyl-CoA = a 3-oxoacyl-CoA + CoA. Its pathway is lipid metabolism; fatty acid beta-oxidation. In terms of biological role, catalyzes the final step of fatty acid oxidation in which acetyl-CoA is released and the CoA ester of a fatty acid two carbons shorter is formed. Involved in the aerobic and anaerobic degradation of long-chain fatty acids. The chain is 3-ketoacyl-CoA thiolase from Escherichia coli O6:H1 (strain CFT073 / ATCC 700928 / UPEC).